The following is a 252-amino-acid chain: Hydroxyacylglutathione hydrolase (252 aa).

Residues H54, H56, D58, H59, H111, D128, and H166 each contribute to the Zn(2+) site.

This sequence belongs to the metallo-beta-lactamase superfamily. Glyoxalase II family. As to quaternary structure, monomer. Zn(2+) is required as a cofactor.

The catalysed reaction is an S-(2-hydroxyacyl)glutathione + H2O = a 2-hydroxy carboxylate + glutathione + H(+). The protein operates within secondary metabolite metabolism; methylglyoxal degradation; (R)-lactate from methylglyoxal: step 2/2. Thiolesterase that catalyzes the hydrolysis of S-D-lactoyl-glutathione to form glutathione and D-lactic acid. In Vibrio campbellii (strain ATCC BAA-1116), this protein is Hydroxyacylglutathione hydrolase.